Consider the following 204-residue polypeptide: uncharacterized protein (204 aa).

Histidine 9 (tele-phosphohistidine intermediate) is an active-site residue. Glutamate 86 serves as the catalytic Proton donor/acceptor.

It belongs to the phosphoglycerate mutase family.

This is an uncharacterized protein from Acanthamoeba polyphaga (Amoeba).